A 143-amino-acid chain; its full sequence is Actin-depolymerizing factor (143 aa).

The ADF-H domain occupies 11-143 (GMGVADHSKN…DLEVLRERAH (133 aa)).

The protein belongs to the actin-binding proteins ADF family.

Functionally, actin-depolymerizing protein. Severs actin filaments (F-actin) and binds to actin monomers. The sequence is that of Actin-depolymerizing factor from Vitis vinifera (Grape).